The chain runs to 143 residues: Large ribosomal subunit protein uL15 (143 aa).

The tract at residues Met1–Leu57 is disordered. Residues Arg21–Ala31 are compositionally biased toward gly residues.

This sequence belongs to the universal ribosomal protein uL15 family. In terms of assembly, part of the 50S ribosomal subunit.

In terms of biological role, binds to the 23S rRNA. The polypeptide is Large ribosomal subunit protein uL15 (Ralstonia nicotianae (strain ATCC BAA-1114 / GMI1000) (Ralstonia solanacearum)).